The following is an 89-amino-acid chain: Small ribosomal subunit protein uS15 (89 aa).

Belongs to the universal ribosomal protein uS15 family. In terms of assembly, part of the 30S ribosomal subunit. Forms a bridge to the 50S subunit in the 70S ribosome, contacting the 23S rRNA.

One of the primary rRNA binding proteins, it binds directly to 16S rRNA where it helps nucleate assembly of the platform of the 30S subunit by binding and bridging several RNA helices of the 16S rRNA. Functionally, forms an intersubunit bridge (bridge B4) with the 23S rRNA of the 50S subunit in the ribosome. The chain is Small ribosomal subunit protein uS15 from Orientia tsutsugamushi (strain Ikeda) (Rickettsia tsutsugamushi).